The primary structure comprises 92 residues: UPF0237 protein MA_3235 (92 aa).

The ACT domain occupies 7 to 81 (IITVIGSDRV…KSLGVEVKVQ (75 aa)).

The protein belongs to the UPF0237 family.

The polypeptide is UPF0237 protein MA_3235 (Methanosarcina acetivorans (strain ATCC 35395 / DSM 2834 / JCM 12185 / C2A)).